We begin with the raw amino-acid sequence, 334 residues long: Glucosyltransferase 3 (334 aa).

Residues Thr-16, Arg-179, and 249 to 254 contribute to the UDP site; that span reads SHKSAT.

This sequence belongs to the Gtf3 glucosyltransferase family. As to quaternary structure, homotetramer; a dimer of dimers.

Its pathway is protein modification; protein glycosylation. Required for polymorphic O-glycosylation of the serine-rich repeat protein in this bacteria. Catalyzes the second step in glycosylation by transferring glucose from UDP-glucose to the terminal GlcNAc moiety of the 3-O-(N-acetyl-alpha-D-glucosaminyl)-L-seryl-[protein] resulting from the first glycosylation step. In terms of biological role, part of the accessory SecA2/SecY2 system specifically required to export GspB, a serine-rich repeat cell wall protein encoded upstream in the same operon. The protein is Glucosyltransferase 3 of Streptococcus gordonii.